Consider the following 336-residue polypeptide: Biotin synthase (336 aa).

The Radical SAM core domain maps to 36–263; it reads TKVQISTLLS…ESHVRLAAGR (228 aa). The [4Fe-4S] cluster site is built by Cys-51, Cys-55, and Cys-58. 4 residues coordinate [2Fe-2S] cluster: Cys-95, Cys-126, Cys-186, and Arg-258.

Belongs to the radical SAM superfamily. Biotin synthase family. In terms of assembly, homodimer. Requires [4Fe-4S] cluster as cofactor. [2Fe-2S] cluster serves as cofactor.

The enzyme catalyses (4R,5S)-dethiobiotin + (sulfur carrier)-SH + 2 reduced [2Fe-2S]-[ferredoxin] + 2 S-adenosyl-L-methionine = (sulfur carrier)-H + biotin + 2 5'-deoxyadenosine + 2 L-methionine + 2 oxidized [2Fe-2S]-[ferredoxin]. It functions in the pathway cofactor biosynthesis; biotin biosynthesis; biotin from 7,8-diaminononanoate: step 2/2. Functionally, catalyzes the conversion of dethiobiotin (DTB) to biotin by the insertion of a sulfur atom into dethiobiotin via a radical-based mechanism. This chain is Biotin synthase, found in Gluconobacter oxydans (strain 621H) (Gluconobacter suboxydans).